Here is a 558-residue protein sequence, read N- to C-terminus: Potassium-transporting ATPase potassium-binding subunit (558 aa).

11 helical membrane passes run 1–21, 59–79, 85–105, 130–150, 179–199, 245–265, 279–299, 374–394, 416–436, 484–504, and 527–547; these read MDTLAGILQVASVVLVLVLIH, PAYLRAVLAFSLVGVLVVYGL, FLPYALGLPAVPEGLSFNTAV, GLAVQNFVSAAVGIAVAIALV, LSLVTAVILIAGGVIQNFAGF, PTAWTSAFQVILMLAIPFSLP, TAIVAVMATIFVVSFTALTIF, GLYGMLILAVISVFVAGLLVG, ILVTPILVLVGTALSFAIPAV, ALGVAMLLGRFLPIVFVLALA, and FVGLLIGVTVIVTALTYFPVL.

This sequence belongs to the KdpA family. The system is composed of three essential subunits: KdpA, KdpB and KdpC.

It localises to the cell membrane. In terms of biological role, part of the high-affinity ATP-driven potassium transport (or Kdp) system, which catalyzes the hydrolysis of ATP coupled with the electrogenic transport of potassium into the cytoplasm. This subunit binds the extracellular potassium ions and delivers the ions to the membrane domain of KdpB through an intramembrane tunnel. This Clavibacter michiganensis subsp. michiganensis (strain NCPPB 382) protein is Potassium-transporting ATPase potassium-binding subunit.